Here is a 339-residue protein sequence, read N- to C-terminus: Heat-inducible transcription repressor HrcA (339 aa).

It belongs to the HrcA family.

Functionally, negative regulator of class I heat shock genes (grpE-dnaK-dnaJ and groELS operons). Prevents heat-shock induction of these operons. In Methylobacillus flagellatus (strain ATCC 51484 / DSM 6875 / VKM B-1610 / KT), this protein is Heat-inducible transcription repressor HrcA.